Consider the following 325-residue polypeptide: DNA-directed RNA polymerase subunit alpha (325 aa).

The interval 1 to 231 (MQTSLLKPKI…DQLSVFAALE (231 aa)) is alpha N-terminal domain (alpha-NTD). The interval 246–325 (IDPILLRPVD…ENWPPAGLDK (80 aa)) is alpha C-terminal domain (alpha-CTD).

This sequence belongs to the RNA polymerase alpha chain family. As to quaternary structure, homodimer. The RNAP catalytic core consists of 2 alpha, 1 beta, 1 beta' and 1 omega subunit. When a sigma factor is associated with the core the holoenzyme is formed, which can initiate transcription.

The catalysed reaction is RNA(n) + a ribonucleoside 5'-triphosphate = RNA(n+1) + diphosphate. Its function is as follows. DNA-dependent RNA polymerase catalyzes the transcription of DNA into RNA using the four ribonucleoside triphosphates as substrates. This Paraburkholderia phymatum (strain DSM 17167 / CIP 108236 / LMG 21445 / STM815) (Burkholderia phymatum) protein is DNA-directed RNA polymerase subunit alpha.